The primary structure comprises 322 residues: MDSTIPVLGTELTPINGREETPCYKQTLSFTGLTCIVSLVALTGNAVVLWLLGCRMRRNAVSIYILNLVAADFLFLSGHIICSPLRLINIRHPISKILSPVMTFPYFIGLSMLSAISTERCLSILWPIWYHCRRPRYLSSVMCVLLWALSLLRSILEWMFCDFLFSGANSVWCETSDFITIAWLVFLCVVLCGSSLVLLVRILCGSRKMPLTRLYVTILLTVLVFLLCGLPFGIQWALFSRIHLDWKVLFCHVHLVSIFLSALNSSANPIIYFFVGSFRQRQNRQNLKLVLQRALQDTPEVDEGGGWLPQETLELSGSRLEQ.

Over 1–31 (MDSTIPVLGTELTPINGREETPCYKQTLSFT) the chain is Extracellular. A helical membrane pass occupies residues 32 to 52 (GLTCIVSLVALTGNAVVLWLL). At 53–60 (GCRMRRNA) the chain is on the cytoplasmic side. The helical transmembrane segment at 61–81 (VSIYILNLVAADFLFLSGHII) threads the bilayer. Residues 82 to 96 (CSPLRLINIRHPISK) lie on the Extracellular side of the membrane. The helical transmembrane segment at 97 to 117 (ILSPVMTFPYFIGLSMLSAIS) threads the bilayer. Residues 118–140 (TERCLSILWPIWYHCRRPRYLSS) are Cytoplasmic-facing. The helical transmembrane segment at 141 to 161 (VMCVLLWALSLLRSILEWMFC) threads the bilayer. The Extracellular portion of the chain corresponds to 162-177 (DFLFSGANSVWCETSD). Residues 178-198 (FITIAWLVFLCVVLCGSSLVL) traverse the membrane as a helical segment. Residues 199–213 (LVRILCGSRKMPLTR) lie on the Cytoplasmic side of the membrane. The chain crosses the membrane as a helical span at residues 214 to 234 (LYVTILLTVLVFLLCGLPFGI). The Extracellular segment spans residues 235 to 254 (QWALFSRIHLDWKVLFCHVH). A helical transmembrane segment spans residues 255–275 (LVSIFLSALNSSANPIIYFFV). At 276-322 (GSFRQRQNRQNLKLVLQRALQDTPEVDEGGGWLPQETLELSGSRLEQ) the chain is on the cytoplasmic side.

Belongs to the G-protein coupled receptor 1 family. Mas subfamily. Uniquely localized in a subset of small dorsal root and trigeminal sensory neurons.

Its subcellular location is the cell membrane. Its function is as follows. Orphan receptor. Probably involved in the function of nociceptive neurons. May regulate nociceptor function and/or development, including the sensation or modulation of pain. Potently activated by enkephalins. In Homo sapiens (Human), this protein is Mas-related G-protein coupled receptor member X3 (MRGPRX3).